The following is a 731-amino-acid chain: MASCPDSDNSWVLAGSESLPVETLGPASRMDPESERALQAPHSPSKTDGKELAGTMDGEGTLFQTESPQSGSILTEETEVKGTLEGDVCGVEPPGPGDTVVQGDLQETTVVTGLGPDTQDLEGQSPPQSLPSTPKAAWIREEGRCSSSDDDTDVDMEGLRRRRGREAGPPQPMVPLAVENQAGGEGAGGELGISLNMCLLGALVLLGLGVLLFSGGLSESETGPMEEVERQVLPDPEVLEAVGDRQDGLREQLQAPVPPDSVPSLQNMGLLLDKLAKENQDIRLLQAQLQAQKEELQSLMHQPKGLEEENAQLRGALQQGEAFQRALESELQQLRARLQGLEADCVRGPDGVCLSGGRGPQGDKAIREQGPREQEPELSFLKQKEQLEAEAQALRQELERQRRLLGSVQQDLERSLQDASRGDPAHAGLAELGHRLAQKLQGLENWGQDPGVSANASKAWHQKSHFQNSREWSGKEKWWDGQRDRKAEHWKHKKEESGRERKKNWGGQEDREPAGRWKEGRPRVEESGSKKEGKRQGPKEPPRKSGSFHSSGEKQKQPRWREGTKDSHDPLPSWAELLRPKYRAPQGCSGVDECARQEGLTFFGTELAPVRQQELASLLRTYLARLPWAGQLTKELPLSPAFFGEDGIFRHDRLRFRDFVDALEDSLEEVAVQQTGDDDEVDDFEDFIFSHFFGDKALKKRSGKKDKHSQSPRAAGPREGHSHSHHHHHRG.

The segment covering 1–10 (MASCPDSDNS) has biased composition (polar residues). Residues 1–155 (MASCPDSDNS…SSSDDDTDVD (155 aa)) form a disordered region. Ser43 is modified (phosphoserine). Polar residues-rich tracts occupy residues 62–75 (LFQT…SILT) and 121–132 (LEGQSPPQSLPS). Phosphoserine occurs at positions 129, 146, 147, and 148. Thr152 is modified (phosphothreonine). Residues 270-348 (LLLDKLAKEN…QGLEADCVRG (79 aa)) adopt a coiled-coil conformation. 3 disordered regions span residues 354–377 (LSGG…QEPE), 447–572 (GQDP…DPLP), and 698–731 (LKKR…HHRG). Positions 364 to 375 (KAIREQGPREQE) are enriched in basic and acidic residues. Residues 377 to 417 (ELSFLKQKEQLEAEAQALRQELERQRRLLGSVQQDLERSLQ) are a coiled coil. Composition is skewed to basic and acidic residues over residues 472-499 (WSGK…ESGR), 508-543 (QEDR…EPPR), and 551-569 (SGEK…DSHD). The Nuclear localization signal signature appears at 485–505 (RKAEHWKHKKEESGRERKKNW). Ser567 carries the phosphoserine modification. The Nuclear localization signal signature appears at 695-720 (DKALKKRSGKKDKHSQSPRAAGPREG). Over residues 698 to 707 (LKKRSGKKDK) the composition is skewed to basic residues.

In terms of assembly, interacts with TEX11. Interacts with ESR1, PBX1, PBX2 and PBX3. Expressed in early hematopoietic precursors.

The protein localises to the cytoplasm. Its subcellular location is the cytoskeleton. It localises to the nucleus. Its function is as follows. Regulator of pre-B-cell leukemia transcription factors (BPXs) function. Inhibits the binding of PBX1-HOX complex to DNA and blocks the transcriptional activity of E2A-PBX1. Tethers estrogen receptor-alpha (ESR1) to microtubules and allows them to influence estrogen receptors-alpha signaling. This Homo sapiens (Human) protein is Pre-B-cell leukemia transcription factor-interacting protein 1 (PBXIP1).